The following is a 131-amino-acid chain: Insulin-like 3 (131 aa).

The first 20 residues, 1 to 20 (MDPRLPAWALVLLGPALVFA), serve as a signal peptide directing secretion. Disulfide bonds link Cys-34/Cys-116, Cys-46/Cys-129, and Cys-115/Cys-120. Positions 58–104 (PATGGDRELLQWLERRHLLHGLVADSNLTLGPGLQPLPQTSHHHRHH) are cleaved as a propeptide — c peptide like.

This sequence belongs to the insulin family. Heterodimer of a B chain and an A chain linked by two disulfide bonds. Expressed in prenatal and postnatal Leydig cells. Found as well in the corpus luteum, trophoblast, fetal membranes and breast.

The protein localises to the secreted. Seems to play a role in testicular function. May be a trophic hormone with a role in testicular descent in fetal life. Is a ligand for LGR8 receptor. In Homo sapiens (Human), this protein is Insulin-like 3 (INSL3).